The sequence spans 371 residues: Probable F-box protein At1g65740 (371 aa).

The F-box domain occupies 2 to 49 (VDWSTLPEELLHFIAARSFSLVEYKRFSSICVSWHSSVSGVKKNPFHR).

This chain is Probable F-box protein At1g65740, found in Arabidopsis thaliana (Mouse-ear cress).